The following is a 380-amino-acid chain: Cytochrome b (380 aa).

A run of 4 helical transmembrane segments spans residues 34–54 (FGSL…LLAM), 78–99 (WLIR…YLHI), 114–134 (WNTG…GYVL), and 179–199 (FFAL…IHLT). The heme b site is built by His84 and His98. Residues His183 and His197 each contribute to the heme b site. Residue His202 participates in a ubiquinone binding. Helical transmembrane passes span 227–247 (LKDA…ALFS), 289–309 (LGGV…PLLH), 321–341 (LSQL…WIGS), and 348–368 (FIII…ILFP).

It belongs to the cytochrome b family. As to quaternary structure, the cytochrome bc1 complex contains 11 subunits: 3 respiratory subunits (MT-CYB, CYC1 and UQCRFS1), 2 core proteins (UQCRC1 and UQCRC2) and 6 low-molecular weight proteins (UQCRH/QCR6, UQCRB/QCR7, UQCRQ/QCR8, UQCR10/QCR9, UQCR11/QCR10 and a cleavage product of UQCRFS1). This cytochrome bc1 complex then forms a dimer. Requires heme b as cofactor.

The protein resides in the mitochondrion inner membrane. Component of the ubiquinol-cytochrome c reductase complex (complex III or cytochrome b-c1 complex) that is part of the mitochondrial respiratory chain. The b-c1 complex mediates electron transfer from ubiquinol to cytochrome c. Contributes to the generation of a proton gradient across the mitochondrial membrane that is then used for ATP synthesis. In Oceanodroma tethys (Wedge-rumped storm-petrel), this protein is Cytochrome b (MT-CYB).